The primary structure comprises 100 residues: Large ribosomal subunit protein eL21 (100 aa).

The protein belongs to the eukaryotic ribosomal protein eL21 family.

In Pyrobaculum aerophilum (strain ATCC 51768 / DSM 7523 / JCM 9630 / CIP 104966 / NBRC 100827 / IM2), this protein is Large ribosomal subunit protein eL21.